A 360-amino-acid polypeptide reads, in one-letter code: S-adenosylmethionine:tRNA ribosyltransferase-isomerase (360 aa).

It belongs to the QueA family. In terms of assembly, monomer.

The protein resides in the cytoplasm. The catalysed reaction is 7-aminomethyl-7-carbaguanosine(34) in tRNA + S-adenosyl-L-methionine = epoxyqueuosine(34) in tRNA + adenine + L-methionine + 2 H(+). It functions in the pathway tRNA modification; tRNA-queuosine biosynthesis. Functionally, transfers and isomerizes the ribose moiety from AdoMet to the 7-aminomethyl group of 7-deazaguanine (preQ1-tRNA) to give epoxyqueuosine (oQ-tRNA). This Burkholderia mallei (strain NCTC 10247) protein is S-adenosylmethionine:tRNA ribosyltransferase-isomerase.